A 190-amino-acid chain; its full sequence is Xanthine phosphoribosyltransferase 2 (190 aa).

2 residues coordinate xanthine: Leu-20 and Asn-27. 129-133 (ANGCA) provides a ligand contact to 5-phospho-alpha-D-ribose 1-diphosphate. A xanthine-binding site is contributed by Lys-157.

It belongs to the purine/pyrimidine phosphoribosyltransferase family. Xpt subfamily. In terms of assembly, homodimer.

It localises to the cytoplasm. It carries out the reaction XMP + diphosphate = xanthine + 5-phospho-alpha-D-ribose 1-diphosphate. Its pathway is purine metabolism; XMP biosynthesis via salvage pathway; XMP from xanthine: step 1/1. Its function is as follows. Converts the preformed base xanthine, a product of nucleic acid breakdown, to xanthosine 5'-monophosphate (XMP), so it can be reused for RNA or DNA synthesis. The polypeptide is Xanthine phosphoribosyltransferase 2 (Clostridium botulinum (strain ATCC 19397 / Type A)).